We begin with the raw amino-acid sequence, 243 residues long: Transcription factor TFIIS homolog (243 aa).

The TFIIS central domain occupies 77-201 (MRDIIQMMFF…SQQKVAEKTS (125 aa)). A TFIIS-type zinc finger spans residues 202–242 (QLYKCPNCKQRMCTYREVQTRALDEPSTIFCTCKKCGHEFI). Residues Cys-206, Cys-209, Cys-234, and Cys-237 each coordinate Zn(2+).

This sequence belongs to the TFS-II family.

Putative initiation factor. Necessary for efficient transcription elongation past template-encoded arresting sites. In Ornithodoros (relapsing fever ticks), this protein is Transcription factor TFIIS homolog.